A 737-amino-acid polypeptide reads, in one-letter code: Aryl hydrocarbon receptor nuclear translocator 2 (737 aa).

The tract at residues 1-73 is disordered; the sequence is MATPAAVNPS…SRYDDDQIPG (73 aa). The segment covering 64–73 has biased composition (basic and acidic residues); it reads SRYDDDQIPG. Residues 78 to 131 enclose the bHLH domain; it reads YARENHSEIERRRRNKMTQYITELSDMVPTCSALARKPDKLTILRMAVSHMKSM. PAS domains follow at residues 149 to 221 and 340 to 406; these read TEQE…ENSM and SMDM…QVVK. Residues 413–456 enclose the PAC domain; sequence SVMYRFRMKNREWMLIRTSSFTFQNPYSDEIEYIICTNTNVKQL. Disordered regions lie at residues 525-556 and 588-721; these read MMVP…FSSS and QVSW…TTNY. 2 stretches are compositionally biased toward polar residues: residues 528–543 and 588–626; these read PSST…QGSP and QVSW…YQAD. Over residues 627–642 the composition is skewed to low complexity; it reads PSSYSPLSSPATSSPS. A compositionally biased stretch (polar residues) spans 643–656; the sequence is GNAYSNLANRNTAF. The segment covering 659–688 has biased composition (low complexity); that stretch reads SGESSQSGGQFQGRPSEVWSQWQSQHHSQQ.

In terms of assembly, efficient DNA binding requires dimerization with another bHLH protein. Heterodimer with the aryl hydrocarbon receptor (AHR), SIM1 or HIF2A/EPAS-1. Isoform 1 and isoform 2 are most highly expressed in the brain, eye and skeletal muscle and to a lower degree in liver, heart, kidney and swim bladder. Isoform 3 is most highly expressed in the eye, forebrain, midbrain, hindbrain, skeletal muscle, gills and brain but is barely detectable in liver, heart, kidney and swim bladder. Before the pharyngula period isoform 3 is expressed throughout the entire embryo and during this period extensively in the brain and eye.

It is found in the nucleus. Transcription factor that plays a role in the development of the hypothalamo-pituitary axis. Specifically recognizes the xenobiotic response element (XRE). Isoform 1 acts as a transcriptional activator. Isoform 3 acts as a transcriptional repressor. This is Aryl hydrocarbon receptor nuclear translocator 2 from Danio rerio (Zebrafish).